Here is a 202-residue protein sequence, read N- to C-terminus: LexA repressor (202 aa).

The segment at residues 28-48 is a DNA-binding region (H-T-H motif); the sequence is RAEIAQRLGFRSPNAAEEHLK. Catalysis depends on for autocatalytic cleavage activity residues Ser-119 and Lys-156.

It belongs to the peptidase S24 family. In terms of assembly, homodimer.

It carries out the reaction Hydrolysis of Ala-|-Gly bond in repressor LexA.. Functionally, represses a number of genes involved in the response to DNA damage (SOS response), including recA and lexA. Binds to the 16 bp palindromic sequence 5'-CTGTATATATATACAG-3'. In the presence of single-stranded DNA, RecA interacts with LexA causing an autocatalytic cleavage which disrupts the DNA-binding part of LexA, leading to derepression of the SOS regulon and eventually DNA repair. This chain is LexA repressor, found in Escherichia fergusonii (strain ATCC 35469 / DSM 13698 / CCUG 18766 / IAM 14443 / JCM 21226 / LMG 7866 / NBRC 102419 / NCTC 12128 / CDC 0568-73).